A 113-amino-acid polypeptide reads, in one-letter code: C-X-C motif chemokine 6 (113 aa).

The first 36 residues, 1 to 36 (MSLLPSRAARVPGPSSSLCALLALLLLTPPGPLVSA), serve as a signal peptide directing secretion. 2 disulfides stabilise this stretch: cysteine 48–cysteine 74 and cysteine 50–cysteine 90.

The protein belongs to the intercrine alpha (chemokine CxC) family.

The protein resides in the secreted. In terms of biological role, chemotactic for neutrophil granulocytes. Signals through binding and activation of its receptors (CXCR1 and CXCR2). In addition to its chemotactic and angiogenic properties, it has strong antibacterial activity against Gram-positive and Gram-negative bacteria (90-fold-higher when compared to CXCL5 and CXCL7). This Equus caballus (Horse) protein is C-X-C motif chemokine 6 (CXCL6).